The primary structure comprises 84 residues: PAMP-induced secreted peptide 2 (84 aa).

The first 24 residues, 1-24 (MMMNKNVLSSILFFMLIGSVLVES), serve as a signal peptide directing secretion. A disordered region spans residues 50-84 (KDSGPSPGEGHKVVDRKDTFRFVKHSGPSPSGPGH). Residues 58–70 (EGHKVVDRKDTFR) are compositionally biased toward basic and acidic residues. 2 positions are modified to 4-hydroxyproline: P77 and P79.

In terms of processing, contains 4-hydroxyproline; hydroxylated on Pro-77 and Pro-79.

The protein resides in the secreted. Its subcellular location is the extracellular space. It is found in the apoplast. Functionally, endogenous secreted peptide that acts as elicitor of immune response and positive regulator of defense response. Amplifies the immune response triggered by flg22, the active epitope of bacterial flagellin. Acts as a negative regulator of root growth. In Arabidopsis thaliana (Mouse-ear cress), this protein is PAMP-induced secreted peptide 2.